Consider the following 194-residue polypeptide: Outer surface 22 kDa lipoprotein (194 aa).

The first 21 residues, M1–A21, serve as a signal peptide directing secretion. Residue C22 is the site of N-palmitoyl cysteine attachment. C22 carries S-diacylglycerol cysteine lipidation.

It localises to the cell outer membrane. This is Outer surface 22 kDa lipoprotein (p22) from Borreliella burgdorferi (strain N40) (Borrelia burgdorferi).